Here is a 324-residue protein sequence, read N- to C-terminus: tRNA-cytidine(32) 2-sulfurtransferase (324 aa).

The tract at residues M1 to L26 is disordered. Residues P14–L26 show a composition bias toward basic and acidic residues. Positions S55–S60 match the PP-loop motif motif. [4Fe-4S] cluster is bound by residues C130, C133, and C221. The segment at R278–G310 is disordered.

It belongs to the TtcA family. As to quaternary structure, homodimer. Mg(2+) serves as cofactor. It depends on [4Fe-4S] cluster as a cofactor.

Its subcellular location is the cytoplasm. It catalyses the reaction cytidine(32) in tRNA + S-sulfanyl-L-cysteinyl-[cysteine desulfurase] + AH2 + ATP = 2-thiocytidine(32) in tRNA + L-cysteinyl-[cysteine desulfurase] + A + AMP + diphosphate + H(+). It functions in the pathway tRNA modification. In terms of biological role, catalyzes the ATP-dependent 2-thiolation of cytidine in position 32 of tRNA, to form 2-thiocytidine (s(2)C32). The sulfur atoms are provided by the cysteine/cysteine desulfurase (IscS) system. In Bordetella petrii (strain ATCC BAA-461 / DSM 12804 / CCUG 43448), this protein is tRNA-cytidine(32) 2-sulfurtransferase.